Reading from the N-terminus, the 102-residue chain is Acid shock protein (102 aa).

The N-terminal stretch at 1 to 21 is a signal peptide; that stretch reads MKKVLGLVVAAAMGLSSAAFA. Residues 22 to 41 are compositionally biased toward low complexity; it reads AETATTPAPTATTTKAAPAK. Residues 22–58 constitute a propeptide that is removed on maturation; sequence AETATTPAPTATTTKAAPAKTTHHKKQHKAAPAQKAQ. The disordered stretch occupies residues 22–102; that stretch reads AETATTPAPT…PAKPAAQPAA (81 aa). Basic residues predominate over residues 80-90; that stretch reads AAKKHAGKHSH. A compositionally biased stretch (low complexity) spans 91 to 102; the sequence is QQPAKPAAQPAA.

Belongs to the Asr family. Proteolytic processing gives rise to the active protein.

It localises to the periplasm. Functionally, required for growth and/or survival at acidic conditions. The protein is Acid shock protein of Escherichia coli (strain SE11).